We begin with the raw amino-acid sequence, 248 residues long: Small ribosomal subunit protein uS2 (248 aa).

The protein belongs to the universal ribosomal protein uS2 family.

The sequence is that of Small ribosomal subunit protein uS2 from Thiobacillus denitrificans (strain ATCC 25259 / T1).